Reading from the N-terminus, the 244-residue chain is 1-(5-phosphoribosyl)-5-[(5-phosphoribosylamino)methylideneamino] imidazole-4-carboxamide isomerase (244 aa).

Asp-8 serves as the catalytic Proton acceptor. The Proton donor role is filled by Asp-130.

The protein belongs to the HisA/HisF family.

The protein localises to the cytoplasm. It catalyses the reaction 1-(5-phospho-beta-D-ribosyl)-5-[(5-phospho-beta-D-ribosylamino)methylideneamino]imidazole-4-carboxamide = 5-[(5-phospho-1-deoxy-D-ribulos-1-ylimino)methylamino]-1-(5-phospho-beta-D-ribosyl)imidazole-4-carboxamide. It functions in the pathway amino-acid biosynthesis; L-histidine biosynthesis; L-histidine from 5-phospho-alpha-D-ribose 1-diphosphate: step 4/9. This is 1-(5-phosphoribosyl)-5-[(5-phosphoribosylamino)methylideneamino] imidazole-4-carboxamide isomerase from Syntrophomonas wolfei subsp. wolfei (strain DSM 2245B / Goettingen).